The chain runs to 714 residues: Probable serine/threonine-protein kinase At1g09600 (714 aa).

The segment at 1–64 (MGCNCTKGTR…NVGFEERSND (64 aa)) is disordered. Gly2 carries N-myristoyl glycine lipidation. Residues 16–27 (VDNSNSIVSNVN) are compositionally biased toward low complexity. Residues 31-46 (RRSKPKKTPKKKKKSK) show a composition bias toward basic residues. In terms of domain architecture, Protein kinase spans 163–447 (FEKLEKIGQG…TASALESEFF (285 aa)). ATP-binding positions include 169 to 177 (IGQGTYSSV) and Lys192. Catalysis depends on Asp287, which acts as the Proton acceptor. The span at 471 to 498 (KAQEEEAKRKKDTSSKQNDSKQVSRESK) shows a compositional bias: basic and acidic residues. Disordered stretches follow at residues 471–579 (KAQE…RKEL) and 693–714 (VDKK…ANGR). 2 stretches are compositionally biased toward polar residues: residues 506-528 (NAES…NSDK) and 556-573 (GVSS…GSSR).

It belongs to the protein kinase superfamily. Ser/Thr protein kinase family.

This chain is Probable serine/threonine-protein kinase At1g09600, found in Arabidopsis thaliana (Mouse-ear cress).